A 634-amino-acid polypeptide reads, in one-letter code: Threonine--tRNA ligase (634 aa).

Residues Met-1–Thr-61 form the TGS domain. Residues Asp-241 to Pro-532 are catalytic. 3 residues coordinate Zn(2+): Cys-332, His-383, and His-509.

It belongs to the class-II aminoacyl-tRNA synthetase family. As to quaternary structure, homodimer. Zn(2+) is required as a cofactor.

It localises to the cytoplasm. The catalysed reaction is tRNA(Thr) + L-threonine + ATP = L-threonyl-tRNA(Thr) + AMP + diphosphate + H(+). Catalyzes the attachment of threonine to tRNA(Thr) in a two-step reaction: L-threonine is first activated by ATP to form Thr-AMP and then transferred to the acceptor end of tRNA(Thr). Also edits incorrectly charged L-seryl-tRNA(Thr). In Francisella tularensis subsp. holarctica (strain FTNF002-00 / FTA), this protein is Threonine--tRNA ligase.